The primary structure comprises 360 residues: Mannose-1-phosphate guanyltransferase beta-B (360 aa).

Belongs to the transferase hexapeptide repeat family.

The catalysed reaction is alpha-D-mannose 1-phosphate + GTP + H(+) = GDP-alpha-D-mannose + diphosphate. Its pathway is nucleotide-sugar biosynthesis; GDP-alpha-D-mannose biosynthesis; GDP-alpha-D-mannose from alpha-D-mannose 1-phosphate (GTP route): step 1/1. Catalyzes the formation of GDP-mannose, an essential precursor of glycan moieties of glycoproteins and glycolipids. The polypeptide is Mannose-1-phosphate guanyltransferase beta-B (gmppb-b) (Xenopus laevis (African clawed frog)).